The primary structure comprises 688 residues: Polyribonucleotide nucleotidyltransferase (688 aa).

Positions 484 and 490 each coordinate Mg(2+). Residues 550–609 enclose the KH domain; that stretch reads PTTEIFNVAPDKIVEIIGQGGRVIKEIVEKFEVKIDLNKPSGEVKIMGNKERVLKTKEFI. Residues 626-688 form the S1 motif domain; sequence DEVLEAQVKR…NKGKIALDLA (63 aa).

It belongs to the polyribonucleotide nucleotidyltransferase family. Mg(2+) is required as a cofactor.

The protein resides in the cytoplasm. It carries out the reaction RNA(n+1) + phosphate = RNA(n) + a ribonucleoside 5'-diphosphate. Its function is as follows. Involved in mRNA degradation. Catalyzes the phosphorolysis of single-stranded polyribonucleotides processively in the 3'- to 5'-direction. The sequence is that of Polyribonucleotide nucleotidyltransferase from Helicobacter pylori (strain P12).